We begin with the raw amino-acid sequence, 183 residues long: MSSPSPGKRRMDTDVVKLIESKHEVTILGGLNEFVVKFYGPQGTPYEGGVWKVRVDLPDKYPFKSPSIGFMNKIFHPNIDEASGTVCLDVINQTWTALYDLTNIFESFLPQLLAYPNPIDPLNGDAAAMYLHRPEEYKQKIKEYIQKYATEEALKEQEEGTGDSSSESSMSDFSEDEAQDMEL.

In terms of domain architecture, UBC core spans 1–150 (MSSPSPGKRR…IKEYIQKYAT (150 aa)). Lys-60 is modified (N6-acetyllysine). Residue Cys-87 is the Glycyl thioester intermediate of the active site. Residues 152–183 (EALKEQEEGTGDSSSESSMSDFSEDEAQDMEL) are disordered. A compositionally biased stretch (low complexity) spans 163-172 (DSSSESSMSD). Positions 173 to 183 (FSEDEAQDMEL) are enriched in acidic residues.

The protein belongs to the ubiquitin-conjugating enzyme family. In terms of assembly, interacts with MAEA and WDR26, components of the CTLH complex that contains GID4, RANBP9 and/or RANBP10, MKLN1, MAEA, RMND5A (or alternatively its paralog RMND5B), GID8, ARMC8, WDR26 and YPEL5. Autoubiquitinated in vitro in the presence of NEDD4L.

It catalyses the reaction S-ubiquitinyl-[E1 ubiquitin-activating enzyme]-L-cysteine + [E2 ubiquitin-conjugating enzyme]-L-cysteine = [E1 ubiquitin-activating enzyme]-L-cysteine + S-ubiquitinyl-[E2 ubiquitin-conjugating enzyme]-L-cysteine.. The catalysed reaction is S-ubiquitinyl-[E1 ubiquitin-activating enzyme]-L-cysteine + [acceptor protein]-L-lysine = [E1 ubiquitin-activating enzyme]-L-cysteine + N(6)-monoubiquitinyl-[acceptor protein]-L-lysine.. Its pathway is protein modification; protein ubiquitination. Accepts ubiquitin from the E1 complex and catalyzes its covalent attachment to other proteins. E2 ubiquitin conjugating enzyme that transfers ubiquitin to MAEA, a core component of the CTLH E3 ubiquitin-protein ligase complex. In vitro catalyzes 'Lys-11'- and 'Lys-48'-linked polyubiquitination. Capable, in vitro, to ubiquitinate histone H2A. The sequence is that of Ubiquitin-conjugating enzyme E2 H (UBE2H) from Homo sapiens (Human).